A 638-amino-acid polypeptide reads, in one-letter code: Threonine--tRNA ligase 2 (638 aa).

Residues 1–64 (MSKHVHIQLP…EEDAELSIVT (64 aa)) form the TGS domain. Positions 245 to 535 (DHRKLGKQLG…LIEHYGGAFP (291 aa)) are catalytic. Residues Cys-336, His-387, and His-512 each coordinate Zn(2+).

Belongs to the class-II aminoacyl-tRNA synthetase family. In terms of assembly, homodimer. It depends on Zn(2+) as a cofactor.

The protein localises to the cytoplasm. The catalysed reaction is tRNA(Thr) + L-threonine + ATP = L-threonyl-tRNA(Thr) + AMP + diphosphate + H(+). In terms of biological role, catalyzes the attachment of threonine to tRNA(Thr) in a two-step reaction: L-threonine is first activated by ATP to form Thr-AMP and then transferred to the acceptor end of tRNA(Thr). Also edits incorrectly charged L-seryl-tRNA(Thr). The polypeptide is Threonine--tRNA ligase 2 (thrZ) (Bacillus subtilis (strain 168)).